A 489-amino-acid polypeptide reads, in one-letter code: 3-octaprenyl-4-hydroxybenzoate carboxy-lyase (489 aa).

Asn172 lines the Mn(2+) pocket. Prenylated FMN contacts are provided by residues 175-177 (IYR), 189-191 (RWL), and 194-195 (RG). Glu238 serves as a coordination point for Mn(2+). The active-site Proton donor is Asp287.

This sequence belongs to the UbiD family. Homohexamer. Prenylated FMN is required as a cofactor. Mn(2+) serves as cofactor.

It is found in the cell membrane. The catalysed reaction is a 4-hydroxy-3-(all-trans-polyprenyl)benzoate + H(+) = a 2-(all-trans-polyprenyl)phenol + CO2. It participates in cofactor biosynthesis; ubiquinone biosynthesis. In terms of biological role, catalyzes the decarboxylation of 3-octaprenyl-4-hydroxy benzoate to 2-octaprenylphenol, an intermediate step in ubiquinone biosynthesis. This chain is 3-octaprenyl-4-hydroxybenzoate carboxy-lyase, found in Psychromonas ingrahamii (strain DSM 17664 / CCUG 51855 / 37).